Here is a 263-residue protein sequence, read N- to C-terminus: Peptide methionine sulfoxide reductase A4, chloroplastic (263 aa).

The transit peptide at 1-75 (MPPLLASTSS…GLGGLGGSPR (75 aa)) directs the protein to the chloroplast.

Belongs to the MsrA Met sulfoxide reductase family. As to expression, expressed in roots, stems, leaves and flowers.

It localises to the plastid. Its subcellular location is the chloroplast. It catalyses the reaction L-methionyl-[protein] + [thioredoxin]-disulfide + H2O = L-methionyl-(S)-S-oxide-[protein] + [thioredoxin]-dithiol. The enzyme catalyses [thioredoxin]-disulfide + L-methionine + H2O = L-methionine (S)-S-oxide + [thioredoxin]-dithiol. Catalyzes the reduction of methionine sulfoxide (MetSO) to methionine in proteins. Involved in abiotic and salt stress responses. Plays a protective role against oxidative stress by restoring activity to proteins that have been inactivated by methionine oxidation. MSRA family specifically reduces the MetSO S-enantiomer. This Oryza sativa subsp. japonica (Rice) protein is Peptide methionine sulfoxide reductase A4, chloroplastic.